The chain runs to 224 residues: UPF0758 protein XF_0148 (224 aa).

The MPN domain occupies 102–224; that stretch reads SIHDPISAGR…PVSFAEHGWL (123 aa). Zn(2+) contacts are provided by His-173, His-175, and Asp-186. The short motif at 173-186 is the JAMM motif element; it reads HNHPSGNREPSPAD.

This sequence belongs to the UPF0758 family.

In Xylella fastidiosa (strain 9a5c), this protein is UPF0758 protein XF_0148.